The following is a 323-amino-acid chain: uncharacterized protein (323 aa).

The N-terminal stretch at 1-45 (MLATLSQIRAWSTEHLIDAAGYWTETADRWEDVFLQMRNQAHAIA) is a signal peptide. Positions 186 to 227 (FKQDGPTPPPPGAPHPSGGADGPYSDPITSMMLPPAGTEAPV) are disordered. Transmembrane regions (helical) follow at residues 269–289 (SAEW…VVGT) and 290–310 (ALAI…LLGV).

The protein resides in the cell membrane. This is an uncharacterized protein from Mycobacterium tuberculosis (strain CDC 1551 / Oshkosh).